The primary structure comprises 503 residues: D-xylose-proton symporter-like 1 (503 aa).

Positions 1 to 23 (MGFDPENQSISSVGQVVGDSSSG) are disordered. The span at 8–23 (QSISSVGQVVGDSSSG) shows a compositional bias: low complexity. Helical transmembrane passes span 51–73 (FLFP…CAIM), 95–115 (IITS…FSVA), 129–149 (FLYL…ILII), 152–172 (VTYG…IAET), 190–210 (VLGM…ISGW), 213–233 (MYAT…WLPA), 305–325 (ALTI…PSVL), 346–366 (ISIL…IVID), 374–394 (LLCG…YYMF), 405–425 (ALLL…WLMI), 437–457 (GISL…FAFS), and 467–487 (ILFC…YYIV).

This sequence belongs to the major facilitator superfamily. Sugar transporter (TC 2.A.1.1) family.

Its subcellular location is the membrane. The polypeptide is D-xylose-proton symporter-like 1 (Arabidopsis thaliana (Mouse-ear cress)).